A 243-amino-acid polypeptide reads, in one-letter code: MLQNIRIVLVETSHTGNMGSVARAMKTMGLTNLWLVNPLVKPDSQAIALAAGASDVIGNAQIVDTLDEALAGCSLVVGTSARSRTLPWPMLDPRECGLKSVAEAANTPVALVFGRERVGLTNDELQKCHYHVAIAANPEYSSLNLAMAVQVIAYEVRMAWLATQENGDAADHEETPYPLVDDLERFYGHLEQTLLSTGFIRENHPGQVMNKLRRLFTRARPESQELNILRGILASIEQQNKGK.

Residues 79-81, G114, I134, and 141-143 contribute to the S-adenosyl-L-methionine site; these read TSA and SSL.

This sequence belongs to the class IV-like SAM-binding methyltransferase superfamily. RNA methyltransferase TrmH family. In terms of assembly, homodimer.

The protein resides in the cytoplasm. The catalysed reaction is cytidine(32) in tRNA + S-adenosyl-L-methionine = 2'-O-methylcytidine(32) in tRNA + S-adenosyl-L-homocysteine + H(+). It carries out the reaction uridine(32) in tRNA + S-adenosyl-L-methionine = 2'-O-methyluridine(32) in tRNA + S-adenosyl-L-homocysteine + H(+). Catalyzes the formation of 2'O-methylated cytidine (Cm32) or 2'O-methylated uridine (Um32) at position 32 in tRNA. In Salmonella paratyphi A (strain ATCC 9150 / SARB42), this protein is tRNA (cytidine/uridine-2'-O-)-methyltransferase TrmJ (trmJ).